The following is a 30-amino-acid chain: Photosystem I reaction center subunit XII (30 aa).

The helical transmembrane segment at 7 to 29 threads the bilayer; that stretch reads VYTVLLIALLASVLAIRLGSTLY.

The protein belongs to the PsaM family.

Its subcellular location is the plastid. It localises to the chloroplast thylakoid membrane. The chain is Photosystem I reaction center subunit XII from Trieres chinensis (Marine centric diatom).